A 256-amino-acid chain; its full sequence is Catechol O-methyltransferase A (256 aa).

A signal peptide spans 1-27 (MLWVVLAVVVVLASVLVLLRQSSGLLA). N-linked (GlcNAc...) asparagine glycosylation occurs at Asn58. S-adenosyl-L-methionine is bound by residues Val84, Ser114, Glu132, and Asp183. Asp183 contacts Mg(2+). Lys186 serves as a coordination point for substrate. Mg(2+) is bound by residues Asp211 and Asn212. The substrate site is built by Asn212 and Glu241.

Belongs to the class I-like SAM-binding methyltransferase superfamily. Cation-dependent O-methyltransferase family. Mg(2+) serves as cofactor. Widely expressed. Has higher expression in females compared to males. Strongly expressed in liver and diencephalon. Expressed at lower levels in hindbrain, spinal cord, eye, telencephalon, spleen, gut, gill and muscle. Detected in ovary and testis. In eye, detected in all layers of the retina with highest expression in the inner nuclear layer. In gut, expressed in the lamina propria but has little or no expression in gut epithelium. In brain, has strongest expression near the midline of the telencephalon, in the periventricular gray zone of the optic tectum, in the preglomerular nucleus, and near the walls of the diencephalic ventricle.

It is found in the secreted. It carries out the reaction a catechol + S-adenosyl-L-methionine = a guaiacol + S-adenosyl-L-homocysteine + H(+). Functionally, catalyzes the O-methylation, and thereby the inactivation, of catecholamine neurotransmitters and catechol hormones. Shows highest activity towards catecholestrogens and dobutamine. Also has lower activity towards L-DOPA, dopamine and epinephrine. Active towards the xenobiotic compounds methyl-DOPA, carbidopa, isoproterenol, and apomorphine. The sequence is that of Catechol O-methyltransferase A from Danio rerio (Zebrafish).